Consider the following 316-residue polypeptide: Ribose-phosphate pyrophosphokinase (316 aa).

ATP-binding positions include 40–42 (DGE) and 99–100 (RQ). Residues His-133 and Asp-174 each contribute to the Mg(2+) site. The active site involves Lys-197. Residues Arg-199, Asp-223, and 227–231 (DTAGT) contribute to the D-ribose 5-phosphate site.

It belongs to the ribose-phosphate pyrophosphokinase family. Class I subfamily. In terms of assembly, homohexamer. Mg(2+) serves as cofactor.

It is found in the cytoplasm. The enzyme catalyses D-ribose 5-phosphate + ATP = 5-phospho-alpha-D-ribose 1-diphosphate + AMP + H(+). It participates in metabolic intermediate biosynthesis; 5-phospho-alpha-D-ribose 1-diphosphate biosynthesis; 5-phospho-alpha-D-ribose 1-diphosphate from D-ribose 5-phosphate (route I): step 1/1. Involved in the biosynthesis of the central metabolite phospho-alpha-D-ribosyl-1-pyrophosphate (PRPP) via the transfer of pyrophosphoryl group from ATP to 1-hydroxyl of ribose-5-phosphate (Rib-5-P). The polypeptide is Ribose-phosphate pyrophosphokinase (Fusobacterium nucleatum subsp. nucleatum (strain ATCC 25586 / DSM 15643 / BCRC 10681 / CIP 101130 / JCM 8532 / KCTC 2640 / LMG 13131 / VPI 4355)).